A 465-amino-acid chain; its full sequence is Kynureninase (465 aa).

Met-1 is modified (N-acetylmethionine). Residues Leu-137, Thr-138, 165–168 (FPSD), Ser-221, Asp-250, His-253, and Tyr-275 each bind pyridoxal 5'-phosphate. At Lys-276 the chain carries N6-(pyridoxal phosphate)lysine. Residues Trp-305 and Asn-333 each contribute to the pyridoxal 5'-phosphate site.

The protein belongs to the kynureninase family. Homodimer. Pyridoxal 5'-phosphate is required as a cofactor. In terms of tissue distribution, expressed in all tissues tested (heart, brain placenta, lung, liver, skeletal muscle, kidney and pancreas). Highest levels found in placenta, liver and lung. Expressed in all brain regions.

The protein resides in the cytoplasm. It is found in the cytosol. The enzyme catalyses L-kynurenine + H2O = anthranilate + L-alanine + H(+). It carries out the reaction 3-hydroxy-L-kynurenine + H2O = 3-hydroxyanthranilate + L-alanine + H(+). It participates in amino-acid degradation; L-kynurenine degradation; L-alanine and anthranilate from L-kynurenine: step 1/1. Its pathway is cofactor biosynthesis; NAD(+) biosynthesis; quinolinate from L-kynurenine: step 2/3. With respect to regulation, inhibited by o-methoxybenzoylalanine (OMBA). Its function is as follows. Catalyzes the cleavage of L-kynurenine (L-Kyn) and L-3-hydroxykynurenine (L-3OHKyn) into anthranilic acid (AA) and 3-hydroxyanthranilic acid (3-OHAA), respectively. Has a preference for the L-3-hydroxy form. Also has cysteine-conjugate-beta-lyase activity. The polypeptide is Kynureninase (Homo sapiens (Human)).